The primary structure comprises 616 residues: Methylmalonyl-CoA mutase small subunit (616 aa).

Belongs to the methylmalonyl-CoA mutase family. As to quaternary structure, heterodimer of an alpha and a beta chain. Adenosylcob(III)alamin serves as cofactor.

It carries out the reaction (R)-methylmalonyl-CoA = succinyl-CoA. The protein operates within metabolic intermediate metabolism; propanoyl-CoA degradation; succinyl-CoA from propanoyl-CoA: step 3/3. Its function is as follows. Catalyzes the isomerization of succinyl-CoA to methylmalonyl-CoA during synthesis of propionate from tricarboxylic acid-cycle intermediates. This conversion most likely represents an important source of building blocks for polyketide antibiotic biosynthesis. It is unable to catalyze the conversion of isobutyryl-CoA into N-butyryl-CoA. The polypeptide is Methylmalonyl-CoA mutase small subunit (mutA) (Streptomyces virginiae (Streptomyces cinnamonensis)).